The chain runs to 536 residues: Mitogen-activated protein kinase kinase kinase mom-4 (536 aa).

Low complexity predominate over residues 1 to 20 (MDNSSQSKPSSSSSSHSPSP). Residues 1 to 34 (MDNSSQSKPSSSSSSHSPSPAAITPTQRTTRDSG) are disordered. A Protein kinase domain is found at 51-305 (NLNSHYLGKG…SSECVEYFTL (255 aa)). ATP contacts are provided by residues 57-65 (LGKGTYGLV) and Lys-84. Asp-176 serves as the catalytic Proton acceptor. A disordered region spans residues 314 to 438 (SVPLSDSSTN…EHRRDSNDEE (125 aa)). Composition is skewed to polar residues over residues 315 to 325 (VPLSDSSTNGP) and 350 to 366 (NNRT…QQPG). Basic and acidic residues predominate over residues 405–438 (KNFRDRAKSEQRQPHRDARPPPPFEHRRDSNDEE).

This sequence belongs to the protein kinase superfamily. STE Ser/Thr protein kinase family. MAP kinase kinase kinase subfamily. Interacts with, and is activated by, tap-1. It depends on Mg(2+) as a cofactor. May be autophosphorylated.

The enzyme catalyses L-seryl-[protein] + ATP = O-phospho-L-seryl-[protein] + ADP + H(+). The catalysed reaction is L-threonyl-[protein] + ATP = O-phospho-L-threonyl-[protein] + ADP + H(+). Functionally, part of the Wnt signaling pathway essential for the specification of the mesodermal cell fate in early embryos. Stimulates the wrm-1/lit-1-dependent phosphorylation of pop-1 and plays a role in the initial nuclear accumulation of wrm-1. The sequence is that of Mitogen-activated protein kinase kinase kinase mom-4 from Caenorhabditis elegans.